The primary structure comprises 92 residues: UPF0237 protein MA_3235 (92 aa).

The ACT domain maps to 7-81 (IITVIGSDRV…KSLGVEVKVQ (75 aa)).

Belongs to the UPF0237 family.

The sequence is that of UPF0237 protein MA_3235 from Methanosarcina acetivorans (strain ATCC 35395 / DSM 2834 / JCM 12185 / C2A).